A 306-amino-acid chain; its full sequence is Ribonuclease Z (306 aa).

The Zn(2+) site is built by His-63, His-65, Asp-67, His-68, His-141, Asp-211, and His-269. The active-site Proton acceptor is the Asp-67.

Belongs to the RNase Z family. Homodimer. Zn(2+) is required as a cofactor.

The catalysed reaction is Endonucleolytic cleavage of RNA, removing extra 3' nucleotides from tRNA precursor, generating 3' termini of tRNAs. A 3'-hydroxy group is left at the tRNA terminus and a 5'-phosphoryl group is left at the trailer molecule.. In terms of biological role, zinc phosphodiesterase, which displays some tRNA 3'-processing endonuclease activity. Probably involved in tRNA maturation, by removing a 3'-trailer from precursor tRNA. In Staphylococcus carnosus (strain TM300), this protein is Ribonuclease Z.